Reading from the N-terminus, the 148-residue chain is MSYRFLTVRAFGFTGFHCDATRLLSETEVIDVPSSLDFVGETELRLETAWPQCEENCYTILPRFNVQVDFEYYPVRVEIVCRVCAASLSVIFSKWDFYCSRRGHFVPVDQNGDLFRIGTLQETGEKYFYFCDKSICRQCIIQAAHHHS.

Transports viral genome to neighboring plant cells directly through plasmosdesmata, without any budding. The movement protein allows efficient cell to cell propagation, by bypassing the host cell wall barrier (Potential). Likely acts as a suppressor of RNA-mediated gene silencing, also known as post-transcriptional gene silencing (PTGS), a mechanism of plant viral defense that performs sequence-specific inhibition of viral mRNAs expression. The protein is Movement protein P1 of Glycine max (Soybean).